Here is a 415-residue protein sequence, read N- to C-terminus: Multifunctional CCA protein (415 aa).

ATP contacts are provided by glycine 8 and arginine 11. Glycine 8 and arginine 11 together coordinate CTP. Positions 21 and 23 each coordinate Mg(2+). The ATP site is built by arginine 91, arginine 137, and arginine 140. 3 residues coordinate CTP: arginine 91, arginine 137, and arginine 140. The 102-residue stretch at 228–329 folds into the HD domain; that stretch reads TGIHTLMTLA…VGLFDSIDAW (102 aa).

It belongs to the tRNA nucleotidyltransferase/poly(A) polymerase family. Bacterial CCA-adding enzyme type 1 subfamily. As to quaternary structure, monomer. Can also form homodimers and oligomers. The cofactor is Mg(2+). Requires Ni(2+) as cofactor.

The catalysed reaction is a tRNA precursor + 2 CTP + ATP = a tRNA with a 3' CCA end + 3 diphosphate. It catalyses the reaction a tRNA with a 3' CCA end + 2 CTP + ATP = a tRNA with a 3' CCACCA end + 3 diphosphate. In terms of biological role, catalyzes the addition and repair of the essential 3'-terminal CCA sequence in tRNAs without using a nucleic acid template. Adds these three nucleotides in the order of C, C, and A to the tRNA nucleotide-73, using CTP and ATP as substrates and producing inorganic pyrophosphate. tRNA 3'-terminal CCA addition is required both for tRNA processing and repair. Also involved in tRNA surveillance by mediating tandem CCA addition to generate a CCACCA at the 3' terminus of unstable tRNAs. While stable tRNAs receive only 3'-terminal CCA, unstable tRNAs are marked with CCACCA and rapidly degraded. The polypeptide is Multifunctional CCA protein (Cronobacter sakazakii (strain ATCC BAA-894) (Enterobacter sakazakii)).